The chain runs to 177 residues: UBA-like domain-containing protein 1 (177 aa).

Residues Glu-89–Arg-177 form a disordered region. Over residues Pro-112–Gln-138 the composition is skewed to low complexity. The segment covering Pro-139–Pro-151 has biased composition (pro residues). Basic and acidic residues predominate over residues Pro-167–Arg-177.

This sequence belongs to the UBALD family.

The sequence is that of UBA-like domain-containing protein 1 (UBALD1) from Homo sapiens (Human).